A 273-amino-acid chain; its full sequence is Dermonecrotic toxin (273 aa).

Positions 20 and 22 each coordinate Mg(2+). H35 (nucleophile) is an active-site residue. A disulfide bridge connects residues C39 and C45. D79 is a Mg(2+) binding site.

This sequence belongs to the arthropod phospholipase D family. Class I subfamily. Mg(2+) serves as cofactor. As to expression, expressed by the venom gland.

It localises to the secreted. It carries out the reaction an N-(acyl)-sphingosylphosphocholine = an N-(acyl)-sphingosyl-1,3-cyclic phosphate + choline. It catalyses the reaction an N-(acyl)-sphingosylphosphoethanolamine = an N-(acyl)-sphingosyl-1,3-cyclic phosphate + ethanolamine. The enzyme catalyses a 1-acyl-sn-glycero-3-phosphocholine = a 1-acyl-sn-glycero-2,3-cyclic phosphate + choline. The catalysed reaction is a 1-acyl-sn-glycero-3-phosphoethanolamine = a 1-acyl-sn-glycero-2,3-cyclic phosphate + ethanolamine. In terms of biological role, dermonecrotic toxins cleave the phosphodiester linkage between the phosphate and headgroup of certain phospholipids (sphingolipid and lysolipid substrates), forming an alcohol (often choline) and a cyclic phosphate. This toxin acts on sphingomyelin (SM). It may also act on ceramide phosphoethanolamine (CPE), lysophosphatidylcholine (LPC) and lysophosphatidylethanolamine (LPE), but not on lysophosphatidylserine (LPS), and lysophosphatidylglycerol (LPG). It acts by transphosphatidylation, releasing exclusively cyclic phosphate products as second products. Induces dermonecrosis, hemolysis, increased vascular permeability, edema, inflammatory response, and platelet aggregation. The polypeptide is Dermonecrotic toxin (Loxosceles laeta (South American recluse spider)).